We begin with the raw amino-acid sequence, 543 residues long: UBP9-binding protein bun62 (543 aa).

Serine 43 is modified (phosphoserine). WD repeat units follow at residues 239 to 279 (LNSS…QPLH), 320 to 361 (FSKS…DVFH), 362 to 401 (SYFA…LVAR), 404 to 448 (GHKS…IHRP), and 513 to 542 (VDDS…TWQR).

Interacts with ubp9 and bun107.

It localises to the nucleus. It is found in the cytoplasm. The protein resides in the cell tip. Functionally, required for the ubp9 recruitment to septa and cell tips but also for its enzymatic activity at these specific locations. This is UBP9-binding protein bun62 (bun62) from Schizosaccharomyces pombe (strain 972 / ATCC 24843) (Fission yeast).